The chain runs to 239 residues: MADETEIQAAAPAEAAPGAEGQGERRGRGGRGRGGNDRGGDRGRGRDGRGRRDDRRGSEEQGEELIEKLVHINRVSKTVKGGKRFGFAALVVVGDGKGRAGFGHGKAREVPEAISKATAAAKKAMVRVPLREGRTLHHDGNGHFGAGRVTVRTAPPGTGIIAGGPMRAIFESLGVADVVTKSVGTSNPYNMIRATFEALKDQTSPKSVSQRRGKKIADLLGRGGASAPVAEAEAAAITE.

A disordered region spans residues 1–62 (MADETEIQAA…DDRRGSEEQG (62 aa)). Low complexity predominate over residues 9-19 (AAAPAEAAPGA). The segment covering 34–62 (GGNDRGGDRGRGRDGRGRRDDRRGSEEQG) has biased composition (basic and acidic residues). The 64-residue stretch at 65–128 (LIEKLVHINR…AAAKKAMVRV (64 aa)) folds into the S5 DRBM domain.

It belongs to the universal ribosomal protein uS5 family. In terms of assembly, part of the 30S ribosomal subunit. Contacts proteins S4 and S8.

With S4 and S12 plays an important role in translational accuracy. Functionally, located at the back of the 30S subunit body where it stabilizes the conformation of the head with respect to the body. The protein is Small ribosomal subunit protein uS5 of Rhizorhabdus wittichii (strain DSM 6014 / CCUG 31198 / JCM 15750 / NBRC 105917 / EY 4224 / RW1) (Sphingomonas wittichii).